The following is a 459-amino-acid chain: Ribulose bisphosphate carboxylase large chain (459 aa).

K4 is modified (N6,N6,N6-trimethyllysine). Substrate-binding residues include N113 and T163. The active-site Proton acceptor is K165. K167 serves as a coordination point for substrate. Positions 191, 193, and 194 each coordinate Mg(2+). K191 is modified (N6-carboxylysine). H284 acts as the Proton acceptor in catalysis. Positions 285, 317, and 369 each coordinate substrate.

It belongs to the RuBisCO large chain family. Type I subfamily. In terms of assembly, heterohexadecamer of 8 large chains and 8 small chains; disulfide-linked. The disulfide link is formed within the large subunit homodimers. Mg(2+) is required as a cofactor. In terms of processing, the disulfide bond which can form in the large chain dimeric partners within the hexadecamer appears to be associated with oxidative stress and protein turnover.

The protein localises to the plastid. The protein resides in the chloroplast. The enzyme catalyses 2 (2R)-3-phosphoglycerate + 2 H(+) = D-ribulose 1,5-bisphosphate + CO2 + H2O. It carries out the reaction D-ribulose 1,5-bisphosphate + O2 = 2-phosphoglycolate + (2R)-3-phosphoglycerate + 2 H(+). Functionally, ruBisCO catalyzes two reactions: the carboxylation of D-ribulose 1,5-bisphosphate, the primary event in carbon dioxide fixation, as well as the oxidative fragmentation of the pentose substrate in the photorespiration process. Both reactions occur simultaneously and in competition at the same active site. The polypeptide is Ribulose bisphosphate carboxylase large chain (Cephalotus follicularis (Albany pitcher plant)).